The sequence spans 274 residues: Orotidine 5'-phosphate decarboxylase (274 aa).

The active-site Proton donor is the K95.

It belongs to the OMP decarboxylase family. Type 2 subfamily.

It carries out the reaction orotidine 5'-phosphate + H(+) = UMP + CO2. Its pathway is pyrimidine metabolism; UMP biosynthesis via de novo pathway; UMP from orotate: step 2/2. This Verminephrobacter eiseniae (strain EF01-2) protein is Orotidine 5'-phosphate decarboxylase.